A 2454-amino-acid chain; its full sequence is Probable serine/threonine-protein kinase DDB_G0277071 (2454 aa).

The span at 31 to 51 (TSSLTTTTTTTTTTTTTTSTT) shows a compositional bias: low complexity. Disordered stretches follow at residues 31 to 57 (TSSL…HESN), 206 to 265 (QQQL…QKQN), 340 to 612 (PRPP…LKIE), 963 to 1051 (NNIN…NENE), 1201 to 1330 (SSDD…SNPL), and 1342 to 1528 (ISKG…SNNT). A coiled-coil region spans residues 259-307 (KQQQKQNSQQQQQQQQQQQQQQQQQQQQQQQQQQQQQQQQQQQKLNIHE). Composition is skewed to low complexity over residues 346-399 (QQHQ…NITP) and 406-428 (PSSV…KPTS). Polar residues predominate over residues 429-444 (IGQIQSLHYHNPSLYQ). 2 stretches are compositionally biased toward low complexity: residues 450–461 (NRNRGNNNNNNN) and 475–536 (SSTV…NTPN). A compositionally biased stretch (gly residues) spans 553–568 (GGIGGGGGGGSGGGGI). Low complexity-rich tracts occupy residues 963–1048 (NNIN…TTTN), 1201–1248 (SSDD…TGGP), 1275–1284 (NSSNNNNTSS), 1299–1324 (SGSS…PTTG), and 1346–1403 (SPAS…SVST). Residues 1417–1441 (LNLSSVSKTGQASTSTPNLLNLKNI) show a composition bias toward polar residues. A compositionally biased stretch (low complexity) spans 1442–1478 (PTTTNNSNSTTTTTTTTPTGKPQFSLNLSSLSKSSSS). The segment covering 1479–1491 (TETVPPSQPNQPI) has biased composition (polar residues). Over residues 1509–1528 (STTTTTTTTTPPPINNSNNT) the composition is skewed to low complexity. The Protein kinase domain occupies 1730 to 2034 (FKDLKRVAKG…TKFIAIKPTI (305 aa)). Residues 1736–1744 (VAKGAYGTV) and Lys1760 contribute to the ATP site. Residue Asp1858 is the Proton acceptor of the active site. In terms of domain architecture, Tyrosine-protein phosphatase spans 2130–2271 (RPSKVASFMY…LCRWGKQRRN (142 aa)). Positions 2379 to 2404 (NINNNNNNNSNNSKSKQQQQQQQNQN) are disordered.

The protein belongs to the protein kinase superfamily. Ser/Thr protein kinase family.

The enzyme catalyses L-seryl-[protein] + ATP = O-phospho-L-seryl-[protein] + ADP + H(+). The catalysed reaction is L-threonyl-[protein] + ATP = O-phospho-L-threonyl-[protein] + ADP + H(+). The chain is Probable serine/threonine-protein kinase DDB_G0277071 from Dictyostelium discoideum (Social amoeba).